We begin with the raw amino-acid sequence, 469 residues long: Citrate synthase, mitochondrial (469 aa).

The transit peptide at 1–33 (MAPVMRLGSAALRSSIHLTSRQTAFTAARCYSS) directs the protein to the mitochondrion. Histidine 352 is an active-site residue.

The protein belongs to the citrate synthase family.

It is found in the mitochondrion matrix. It carries out the reaction oxaloacetate + acetyl-CoA + H2O = citrate + CoA + H(+). Its pathway is carbohydrate metabolism; tricarboxylic acid cycle; isocitrate from oxaloacetate: step 1/2. This is Citrate synthase, mitochondrial (cit-1) from Neurospora crassa (strain ATCC 24698 / 74-OR23-1A / CBS 708.71 / DSM 1257 / FGSC 987).